We begin with the raw amino-acid sequence, 623 residues long: Dictomallein-5 (623 aa).

An N-terminal signal peptide occupies residues 1–21 (MKIFIIKIILVLFNYVLLSYS). The Peptidase M66 domain maps to 174-435 (PNVGQDYTLK…QNYFKNSIYY (262 aa)). Histidine 327 contacts Zn(2+). Glutamate 328 is an active-site residue. 2 residues coordinate Zn(2+): histidine 331 and histidine 337.

This sequence belongs to the dictomallein family. Requires Zn(2+) as cofactor.

It localises to the secreted. The polypeptide is Dictomallein-5 (dtmlE) (Dictyostelium discoideum (Social amoeba)).